The primary structure comprises 352 residues: Alanine racemase (352 aa).

Lys33 functions as the Proton acceptor; specific for D-alanine in the catalytic mechanism. At Lys33 the chain carries N6-(pyridoxal phosphate)lysine. Substrate is bound at residue Arg129. The active-site Proton acceptor; specific for L-alanine is the Tyr250. Residue Met298 coordinates substrate.

It belongs to the alanine racemase family. It depends on pyridoxal 5'-phosphate as a cofactor.

The catalysed reaction is L-alanine = D-alanine. The protein operates within amino-acid biosynthesis; D-alanine biosynthesis; D-alanine from L-alanine: step 1/1. Functionally, catalyzes the interconversion of L-alanine and D-alanine. May also act on other amino acids. The sequence is that of Alanine racemase (alr) from Neisseria meningitidis serogroup A / serotype 4A (strain DSM 15465 / Z2491).